The following is a 144-amino-acid chain: Granulocyte-macrophage colony-stimulating factor (144 aa).

The signal sequence occupies residues 1–17; sequence MWLQNLLFLGTVVCSIS. The O-linked (GalNAc...) serine glycan is linked to Ser-22. Thr-27 carries an O-linked (GalNAc...) threonine glycan. Asn-44 is a glycosylation site (N-linked (GlcNAc...) asparagine). Disulfide bonds link Cys-71-Cys-113 and Cys-105-Cys-138.

It belongs to the GM-CSF family. Monomer. The signaling GM-CSF receptor complex is a dodecamer of two head-to-head hexamers of two alpha, two beta, and two ligand subunits.

The protein localises to the secreted. Functionally, cytokine that stimulates the growth and differentiation of hematopoietic precursor cells from various lineages, including granulocytes, macrophages, eosinophils and erythrocytes. This chain is Granulocyte-macrophage colony-stimulating factor (CSF2), found in Canis lupus familiaris (Dog).